The chain runs to 147 residues: Lysozyme C (147 aa).

An N-terminal signal peptide occupies residues 1–18 (MKALVILGFLFLSVAVQG). The region spanning 19-147 (KVFERCELAR…VSSYVEGCTL (129 aa)) is the C-type lysozyme domain. 4 disulfide bridges follow: C24/C145, C48/C133, C83/C99, and C95/C113. Active-site residues include E53 and D71.

The protein belongs to the glycosyl hydrolase 22 family. As to quaternary structure, monomer. Stomach-specific.

The catalysed reaction is Hydrolysis of (1-&gt;4)-beta-linkages between N-acetylmuramic acid and N-acetyl-D-glucosamine residues in a peptidoglycan and between N-acetyl-D-glucosamine residues in chitodextrins.. Functionally, lysozymes have primarily a bacteriolytic function; those in tissues and body fluids are associated with the monocyte-macrophage system and enhance the activity of immunoagents. The protein is Lysozyme C (LYZ1) of Bos taurus (Bovine).